Here is a 159-residue protein sequence, read N- to C-terminus: Aphid transmission protein (159 aa).

This sequence belongs to the caulimoviridae ORF II family.

This protein is involved in virus transmission. The chain is Aphid transmission protein from Cauliflower mosaic virus (strain CM-1841) (CaMV).